A 78-amino-acid polypeptide reads, in one-letter code: Large ribosomal subunit protein uL24 (78 aa).

A disordered region spans residues 52-78 (PSEKTPNGGHVNKEMPIDISNVAKVEG).

Belongs to the universal ribosomal protein uL24 family. Part of the 50S ribosomal subunit.

One of two assembly initiator proteins, it binds directly to the 5'-end of the 23S rRNA, where it nucleates assembly of the 50S subunit. In terms of biological role, one of the proteins that surrounds the polypeptide exit tunnel on the outside of the subunit. The protein is Large ribosomal subunit protein uL24 of Campylobacter concisus (strain 13826).